Reading from the N-terminus, the 1197-residue chain is PAN2-PAN3 deadenylation complex catalytic subunit PAN2 (1197 aa).

WD repeat units follow at residues 153 to 193, 195 to 231, 244 to 280, and 328 to 367; these read DEAE…QKYT, EVPGITIMRQSNRFFFCGHTSGKVSLRDLRTFVVEHE, VHGNLLVTCGFSSRMNGLACDRFLKVYDLRMMRATTP, and TVGPLIMTFDVSASKQALAFGDSEGCVHLWADSPEVTFNT. The tract at residues 368–485 is linker; sequence YSRETDFALP…IGREEEPHLY (118 aa). A USP domain is found at 486 to 919; sequence MVAKKYRKVT…VPAILYYARR (434 aa). Positions 970–1142 constitute an Exonuclease domain; sequence VGLDAEFVTL…EDARTALQLY (173 aa). A divalent metal cation contacts are provided by Asp-973, Glu-975, Asp-1082, and Asp-1134. The segment at 1176 to 1197 is disordered; it reads VPEPDSQSSPKHGAVFPPVLAL.

The protein belongs to the peptidase C19 family. PAN2 subfamily. Forms a heterotrimer with an asymmetric homodimer of the regulatory subunit PAN3 to form the poly(A)-nuclease (PAN) deadenylation complex. Requires a divalent metal cation as cofactor.

Its subcellular location is the cytoplasm. The protein resides in the P-body. The protein localises to the nucleus. The catalysed reaction is Exonucleolytic cleavage of poly(A) to 5'-AMP.. Its activity is regulated as follows. Positively regulated by the regulatory subunit PAN3. In terms of biological role, catalytic subunit of the poly(A)-nuclease (PAN) deadenylation complex, one of two cytoplasmic mRNA deadenylases involved in general and miRNA-mediated mRNA turnover. PAN specifically shortens poly(A) tails of RNA and the activity is stimulated by poly(A)-binding protein (PABP). PAN deadenylation is followed by rapid degradation of the shortened mRNA tails by the CCR4-NOT complex. Deadenylated mRNAs are then degraded by two alternative mechanisms, namely exosome-mediated 3'-5' exonucleolytic degradation, or deadenylation-dependent mRNA decaping and subsequent 5'-3' exonucleolytic degradation by XRN1. This Gallus gallus (Chicken) protein is PAN2-PAN3 deadenylation complex catalytic subunit PAN2.